The sequence spans 142 residues: Transcription antitermination protein NusB (142 aa).

This sequence belongs to the NusB family.

Functionally, involved in transcription antitermination. Required for transcription of ribosomal RNA (rRNA) genes. Binds specifically to the boxA antiterminator sequence of the ribosomal RNA (rrn) operons. The sequence is that of Transcription antitermination protein NusB from Streptococcus mutans serotype c (strain ATCC 700610 / UA159).